The sequence spans 178 residues: Fatty-acid and retinol-binding protein 1 (178 aa).

Positions 1–16 (MYHRLILLALVGTTMA) are cleaved as a signal peptide. Coiled-coil stretches lie at residues 67-89 (DAAL…ELRN) and 130-153 (KQAA…ELKV).

The protein belongs to the fatty-acid and retinol-binding protein (FARBP) family. Not glycosylated.

The protein resides in the secreted. Its function is as follows. Binds retinol. Also binds the fluorescent fatty acid 11-((5-dimethylaminonaphthalene-1-sulfonyl)amino)undecanoic acid (DAUDA). The long chain fatty acid oleic acid can act competitively to displace bound DAUDA and retinol. This chain is Fatty-acid and retinol-binding protein 1, found in Brugia malayi (Filarial nematode worm).